Consider the following 117-residue polypeptide: Hainantoxin-XV-5 (117 aa).

The signal sequence occupies residues 1–20 (MKLCAVIIASLLVCVAVASS). The disordered stretch occupies residues 20–55 (SSDNQKEFAQEKEMTREETQSLGEHEKDDEVTGSEE). A propeptide spanning residues 21 to 56 (SDNQKEFAQEKEMTREETQSLGEHEKDDEVTGSEER) is cleaved from the precursor. Residues 23 to 55 (NQKEFAQEKEMTREETQSLGEHEKDDEVTGSEE) are compositionally biased toward basic and acidic residues. Intrachain disulfides connect cysteine 58/cysteine 72, cysteine 65/cysteine 78, cysteine 69/cysteine 115, and cysteine 71/cysteine 91.

Belongs to the neurotoxin 03 (Tx2) family. 02 subfamily. HNTX-XV sub-subfamily. Expressed by the venom gland.

It localises to the secreted. Putative ion channel inhibitor. The chain is Hainantoxin-XV-5 from Cyriopagopus hainanus (Chinese bird spider).